A 198-amino-acid chain; its full sequence is CASP-like protein 1U1 (198 aa).

Topologically, residues 1–30 are cytoplasmic; it reads MSDTPVVVIPRKGYVDGHHGYHHSYHSGLN. Residues 31–51 form a helical membrane-spanning segment; sequence LLLRLLQAFATAAAVIVMLLA. Residues 52–73 lie on the Extracellular side of the membrane; sequence TQTEFTRYGEVRGRWRDYPAYK. The helical transmembrane segment at 74–94 threads the bilayer; sequence WFIIANAVVFVYALLATLVAC. Topologically, residues 95 to 117 are cytoplasmic; sequence CALIARRGPLSYSPSAWLTFLLD. A helical transmembrane segment spans residues 118–138; the sequence is FVAASALMSAASAALAVALIA. Residues 139–165 are Extracellular-facing; that stretch reads RNGQNLQGQHYWPTFCNYVTRFCDYAQ. Residues 166-186 traverse the membrane as a helical segment; that stretch reads GAIIASFCGFGLLALSTLLAA. Over 187–198 the chain is Cytoplasmic; the sequence is SALHHLAWHRLH.

Belongs to the Casparian strip membrane proteins (CASP) family. Homodimer and heterodimers.

The protein resides in the cell membrane. The chain is CASP-like protein 1U1 from Physcomitrium patens (Spreading-leaved earth moss).